The sequence spans 123 residues: Small ribosomal subunit protein uS12 (123 aa).

At Asp-89 the chain carries 3-methylthioaspartic acid.

This sequence belongs to the universal ribosomal protein uS12 family. In terms of assembly, part of the 30S ribosomal subunit. Contacts proteins S8 and S17. May interact with IF1 in the 30S initiation complex.

In terms of biological role, with S4 and S5 plays an important role in translational accuracy. Functionally, interacts with and stabilizes bases of the 16S rRNA that are involved in tRNA selection in the A site and with the mRNA backbone. Located at the interface of the 30S and 50S subunits, it traverses the body of the 30S subunit contacting proteins on the other side and probably holding the rRNA structure together. The combined cluster of proteins S8, S12 and S17 appears to hold together the shoulder and platform of the 30S subunit. The polypeptide is Small ribosomal subunit protein uS12 (Syntrophobacter fumaroxidans (strain DSM 10017 / MPOB)).